The chain runs to 155 residues: Ribonuclease 2B (155 aa).

Positions M1 to C25 are cleaved as a signal peptide. H38 functions as the Proton acceptor in the catalytic mechanism. Cystine bridges form between C47/C106, C61/C118, C79/C133, and C86/C94. K62–T66 contributes to the substrate binding site. N-linked (GlcNAc...) asparagine glycosylation occurs at N114. Catalysis depends on H150, which acts as the Proton donor.

Belongs to the pancreatic ribonuclease family.

It carries out the reaction an [RNA] containing cytidine + H2O = an [RNA]-3'-cytidine-3'-phosphate + a 5'-hydroxy-ribonucleotide-3'-[RNA].. The enzyme catalyses an [RNA] containing uridine + H2O = an [RNA]-3'-uridine-3'-phosphate + a 5'-hydroxy-ribonucleotide-3'-[RNA].. This is a non-secretory ribonuclease. It is a pyrimidine specific nuclease with a slight preference for U. Cytotoxin and helminthotoxin. Possesses a wide variety of biological activities. The chain is Ribonuclease 2B from Mus musculus (Mouse).